Reading from the N-terminus, the 142-residue chain is gSG7 salivary protein (142 aa).

The N-terminal stretch at 1 to 26 (MAARMTIMLPLAVALICLLQTEPGMA) is a signal peptide. Disulfide bonds link Cys-84–Cys-139 and Cys-107–Cys-117.

It localises to the secreted. In terms of biological role, salivary protein that moderately inhibits the alternative pathway for complement system activation in the host. The protein is gSG7 salivary protein of Anopheles darlingi (Mosquito).